Here is a 295-residue protein sequence, read N- to C-terminus: Nucleotide-binding protein Lxx11490 (295 aa).

Position 19–26 (19–26 (GMSGAGRS)) interacts with ATP. Residue 70-73 (DVRG) coordinates GTP.

The protein belongs to the RapZ-like family.

In terms of biological role, displays ATPase and GTPase activities. This chain is Nucleotide-binding protein Lxx11490, found in Leifsonia xyli subsp. xyli (strain CTCB07).